Here is a 394-residue protein sequence, read N- to C-terminus: Elongation factor Tu 1 (394 aa).

Residues 10–204 form the tr-type G domain; the sequence is KPHVNVGTIG…ALDSYIPEPE (195 aa). The interval 19-26 is G1; it reads GHVDHGKT. 19–26 contacts GTP; the sequence is GHVDHGKT. T26 contributes to the Mg(2+) binding site. Residues 60 to 64 are G2; it reads GITIS. Residues 81–84 form a G3 region; the sequence is DCPG. Residues 81–85 and 136–139 contribute to the GTP site; these read DCPGH and NKCD. Residues 136 to 139 are G4; it reads NKCD. Residues 174–176 are G5; the sequence is SAL.

The protein belongs to the TRAFAC class translation factor GTPase superfamily. Classic translation factor GTPase family. EF-Tu/EF-1A subfamily. As to quaternary structure, monomer.

Its subcellular location is the cytoplasm. The enzyme catalyses GTP + H2O = GDP + phosphate + H(+). Its function is as follows. GTP hydrolase that promotes the GTP-dependent binding of aminoacyl-tRNA to the A-site of ribosomes during protein biosynthesis. This is Elongation factor Tu 1 from Photorhabdus laumondii subsp. laumondii (strain DSM 15139 / CIP 105565 / TT01) (Photorhabdus luminescens subsp. laumondii).